Consider the following 65-residue polypeptide: Small ribosomal subunit protein bS21 (65 aa).

Belongs to the bacterial ribosomal protein bS21 family.

This chain is Small ribosomal subunit protein bS21, found in Chlorobium limicola (strain DSM 245 / NBRC 103803 / 6330).